The primary structure comprises 282 residues: V-set domain-containing T-cell activation inhibitor 1 (282 aa).

The N-terminal stretch at 1-24 (MASLGQILFWSIISIIIILAGAIA) is a signal peptide. Residues 25–259 (LIIGFGISGR…HLQLLNSKAS (235 aa)) lie on the Extracellular side of the membrane. Ig-like V-type domains lie at 35 to 146 (HSIT…LEYK) and 153 to 241 (PEVN…IKVT). Cystine bridges form between Cys-56/Cys-130 and Cys-168/Cys-225. N-linked (GlcNAc...) asparagine glycosylation occurs at Asn-216. Residues 260-280 (LCVSSFFAISWALLPLSPYLM) form a helical membrane-spanning segment. The Cytoplasmic segment spans residues 281-282 (LK).

Belongs to the immunoglobulin superfamily. BTN/MOG family. Post-translationally, N-glycosylated. As to expression, overexpressed in breast, ovarian, endometrial, renal cell (RCC) and non-small-cell lung cancers (NSCLC). Expressed on activated T- and B-cells, monocytes and dendritic cells, but not expressed in most normal tissues (at protein level). Widely expressed, including in kidney, liver, lung, ovary, placenta, spleen and testis.

The protein localises to the cell membrane. Functionally, negatively regulates T-cell-mediated immune response by inhibiting T-cell activation, proliferation, cytokine production and development of cytotoxicity. When expressed on the cell surface of tumor macrophages, plays an important role, together with regulatory T-cells (Treg), in the suppression of tumor-associated antigen-specific T-cell immunity. Involved in promoting epithelial cell transformation. This Homo sapiens (Human) protein is V-set domain-containing T-cell activation inhibitor 1.